We begin with the raw amino-acid sequence, 180 residues long: Beta-lactoglobulin-1 (180 aa).

An N-terminal signal peptide occupies residues 1 to 18 (MKCLLLALGLALMCGIQA). 2 cysteine pairs are disulfide-bonded: Cys-84–Cys-178 and Cys-124–Cys-137.

It belongs to the calycin superfamily. Lipocalin family. In terms of assembly, monomer.

The protein resides in the secreted. Lactoglobulin is the primary component of whey, it binds retinol and is probably involved in the transport of that molecule. This Equus caballus (Horse) protein is Beta-lactoglobulin-1 (LGB1).